Here is a 509-residue protein sequence, read N- to C-terminus: Maturase K (509 aa).

This sequence belongs to the intron maturase 2 family. MatK subfamily.

Its subcellular location is the plastid. It is found in the chloroplast. Usually encoded in the trnK tRNA gene intron. Probably assists in splicing its own and other chloroplast group II introns. The chain is Maturase K from Dalea purpurea (Violet prairie clover).